A 227-amino-acid chain; its full sequence is MYFAILGTMSRTCVRAYAVFAIAIMVLTVAWFAFSISQAIQRNTVGAQQRFAQVIRRIAPRVTSKRQLTDAEADFIQNLCKNDDLIMALNIFSNRVQLFSWTYDDLMFVAGGGSELVPRSSSLFIKIFSGRVPYQAKDECLLFTAALRVLTPANIFFRGCVVFLVMLTLTISSMVFLVIEYLSVRRFQCAQGDARPRPAGPQGTARSRTDEAQVSPGTPPECPVSVF.

2 helical membrane passes run 13-35 (CVRA…FAFS) and 155-177 (IFFR…MVFL). Residues 192–227 (GDARPRPAGPQGTARSRTDEAQVSPGTPPECPVSVF) form a disordered region. Positions 217 to 227 (GTPPECPVSVF) are enriched in pro residues.

The protein localises to the cell membrane. This is an uncharacterized protein from Treponema pallidum (strain Nichols).